The following is a 351-amino-acid chain: Glucose 1-dehydrogenase 1 (351 aa).

Cysteine 39 contributes to the Zn(2+) binding site. Threonine 41 contributes to the substrate binding site. Positions 64 and 65 each coordinate Zn(2+). Positions 113 and 149 each coordinate substrate. Glutamate 149 contacts Zn(2+). NADP(+) is bound by residues 182–185, 265–267, and 292–294; these read AGPI, LGI, and ATN. Asparagine 294 serves as a coordination point for substrate.

Belongs to the zinc-containing alcohol dehydrogenase family. Glucose 1-dehydrogenase subfamily. Zn(2+) is required as a cofactor.

The enzyme catalyses D-glucose + NAD(+) = D-glucono-1,5-lactone + NADH + H(+). The catalysed reaction is D-glucose + NADP(+) = D-glucono-1,5-lactone + NADPH + H(+). Functionally, catalyzes the NAD(P)(+)-dependent oxidation of D-glucose to D-gluconate via gluconolactone. Can utilize both NAD(+) and NADP(+) as electron acceptor. Is involved in the degradation of glucose through a non-phosphorylative variant of the Entner-Doudoroff pathway. The protein is Glucose 1-dehydrogenase 1 of Vulcanisaeta moutnovskia (strain 768-28).